The chain runs to 401 residues: Phosphoglycerate kinase (401 aa).

Residues 20–22, arginine 35, 58–61, arginine 117, and arginine 154 each bind substrate; these read DFN and HLGR. ATP is bound by residues lysine 204, glycine 298, glutamate 329, and 358-361; that span reads GGDS.

It belongs to the phosphoglycerate kinase family. As to quaternary structure, monomer.

The protein localises to the cytoplasm. It carries out the reaction (2R)-3-phosphoglycerate + ATP = (2R)-3-phospho-glyceroyl phosphate + ADP. It participates in carbohydrate degradation; glycolysis; pyruvate from D-glyceraldehyde 3-phosphate: step 2/5. The sequence is that of Phosphoglycerate kinase from Bifidobacterium adolescentis (strain ATCC 15703 / DSM 20083 / NCTC 11814 / E194a).